The following is a 331-amino-acid chain: CRISPR-associated endonuclease Cas1 1 (331 aa).

The Mn(2+) site is built by E161, H226, and E241.

It belongs to the CRISPR-associated endonuclease Cas1 family. In terms of assembly, homodimer, forms a heterotetramer with a Cas2 homodimer. Mg(2+) is required as a cofactor. The cofactor is Mn(2+).

CRISPR (clustered regularly interspaced short palindromic repeat), is an adaptive immune system that provides protection against mobile genetic elements (viruses, transposable elements and conjugative plasmids). CRISPR clusters contain spacers, sequences complementary to antecedent mobile elements, and target invading nucleic acids. CRISPR clusters are transcribed and processed into CRISPR RNA (crRNA). Acts as a dsDNA endonuclease. Involved in the integration of spacer DNA into the CRISPR cassette. The protein is CRISPR-associated endonuclease Cas1 1 of Methanospirillum hungatei JF-1 (strain ATCC 27890 / DSM 864 / NBRC 100397 / JF-1).